We begin with the raw amino-acid sequence, 186 residues long: Cytochrome c oxidase polypeptide 5, mitochondrial (186 aa).

A mitochondrion-targeting transit peptide spans 1 to 20 (MYLSKIICKKVPMKLLCTRN). The Mitochondrial matrix portion of the chain corresponds to 21–107 (AATVSAAATN…GPRAFSHISQ (87 aa)). A helical membrane pass occupies residues 108 to 128 (KTVFWGTVAGLTIGVVLFGLI). The Mitochondrial intermembrane segment spans residues 129 to 186 (RTQAAPSPRTMTREWQEKSNEYMKENKINPISGEASEGFKGRGQISGGIFSPSEKDKK). Positions 149-186 (EYMKENKINPISGEASEGFKGRGQISGGIFSPSEKDKK) are disordered.

The protein belongs to the cytochrome c oxidase IV family. In terms of assembly, component of the cytochrome c oxidase (complex IV, CIV), a multisubunit enzyme composed of a catalytic core of 3 subunits and seevral supernumerary subunits. The complex exists as a monomer or a dimer and forms supercomplexes (SCs) in the inner mitochondrial membrane with ubiquinol-cytochrome c oxidoreductase (cytochrome b-c1 complex, complex III, CIII).

The protein localises to the mitochondrion inner membrane. It participates in energy metabolism; oxidative phosphorylation. Its function is as follows. Component of the cytochrome c oxidase, the last enzyme in the mitochondrial electron transport chain which drives oxidative phosphorylation. The respiratory chain contains 3 multisubunit complexes succinate dehydrogenase (complex II, CII), ubiquinol-cytochrome c oxidoreductase (cytochrome b-c1 complex, complex III, CIII) and cytochrome c oxidase (complex IV, CIV), that cooperate to transfer electrons derived from NADH and succinate to molecular oxygen, creating an electrochemical gradient over the inner membrane that drives transmembrane transport and the ATP synthase. Cytochrome c oxidase is the component of the respiratory chain that catalyzes the reduction of oxygen to water. Electrons originating from reduced cytochrome c in the intermembrane space (IMS) are transferred via the dinuclear copper A center (CU(A)) of subunit 2 and heme A of subunit 1 to the active site in subunit 1, a binuclear center (BNC) formed by heme A3 and copper B (CU(B)). The BNC reduces molecular oxygen to 2 water molecules using 4 electrons from cytochrome c in the IMS and 4 protons from the mitochondrial matrix. This Schizosaccharomyces pombe (strain 972 / ATCC 24843) (Fission yeast) protein is Cytochrome c oxidase polypeptide 5, mitochondrial (cox5).